We begin with the raw amino-acid sequence, 152 residues long: Transcriptional regulator MraZ (152 aa).

2 SpoVT-AbrB domains span residues 5–52 and 81–124; these read ATLV…PLPE and ASEC…DETT.

This sequence belongs to the MraZ family. Forms oligomers.

The protein resides in the cytoplasm. It is found in the nucleoid. In terms of biological role, negatively regulates its own expression and that of the subsequent genes in the proximal part of the division and cell wall (dcw) gene cluster. Acts by binding directly to DNA. May also regulate the expression of genes outside the dcw cluster. The polypeptide is Transcriptional regulator MraZ (Salmonella paratyphi A (strain ATCC 9150 / SARB42)).